A 269-amino-acid polypeptide reads, in one-letter code: Triosephosphate isomerase (269 aa).

8 to 10 (NWK) serves as a coordination point for substrate. His105 (electrophile) is an active-site residue. Catalysis depends on Glu183, which acts as the Proton acceptor. Substrate-binding positions include Gly189, Ser227, and 248-249 (GG).

Belongs to the triosephosphate isomerase family. As to quaternary structure, homodimer.

Its subcellular location is the cytoplasm. It carries out the reaction D-glyceraldehyde 3-phosphate = dihydroxyacetone phosphate. The protein operates within carbohydrate biosynthesis; gluconeogenesis. It participates in carbohydrate degradation; glycolysis; D-glyceraldehyde 3-phosphate from glycerone phosphate: step 1/1. Involved in the gluconeogenesis. Catalyzes stereospecifically the conversion of dihydroxyacetone phosphate (DHAP) to D-glyceraldehyde-3-phosphate (G3P). The protein is Triosephosphate isomerase of Psychrobacter arcticus (strain DSM 17307 / VKM B-2377 / 273-4).